Here is a 187-residue protein sequence, read N- to C-terminus: MALPCSFSVALVLLSCHSLCCLACHLPDTHGLRNWRVLTLLGQMRRLSAGSCDHYTNDFAFPKELFDGQRLQEAQALSVVHVMTQKVFHLFCPDTSSAPWNMTLLEELCSGLSEQLDDLEACPLQEAGLAETPLMHEDSTLRTYFQRISLYLQDRNHSPCAWEMVRAEIGRSFFSSTILQERIRRRK.

The N-terminal stretch at 1–23 is a signal peptide; that stretch reads MALPCSFSVALVLLSCHSLCCLA. Cystine bridges form between Cys24–Cys122 and Cys52–Cys160. Asn101 is a glycosylation site (N-linked (GlcNAc...) asparagine).

Belongs to the alpha/beta interferon family.

It is found in the secreted. In terms of biological role, produced by macrophages, IFN-alpha have antiviral activities. Interferon stimulates the production of two enzymes: a protein kinase and an oligoadenylate synthetase. The protein is Interferon alpha-1/2 of Canis lupus familiaris (Dog).